Reading from the N-terminus, the 181-residue chain is Urease accessory protein UreE (181 aa).

Residues 143–181 (FDPEPGAYNQAGQGHSHGHSHGHSHNHDHEHSHGHKHAH) are disordered.

It belongs to the UreE family.

The protein resides in the cytoplasm. Involved in urease metallocenter assembly. Binds nickel. Probably functions as a nickel donor during metallocenter assembly. This is Urease accessory protein UreE from Marinobacter nauticus (strain ATCC 700491 / DSM 11845 / VT8) (Marinobacter aquaeolei).